We begin with the raw amino-acid sequence, 598 residues long: NADPH-dependent diflavin oxidoreductase 1 (598 aa).

A Flavodoxin-like domain is found at 6 to 150 (LLVLFGSQTG…AIDPWVGDLW (145 aa)). FMN contacts are provided by residues 12–17 (SQTGTA), 59–62 (ATTG), 97–106 (LGDSSYAKFN), and aspartate 132. The FAD-binding FR-type domain maps to 206–448 (LQPFLAPVIT…VRPGSLVFPK (243 aa)). FAD contacts are provided by residues arginine 350, 382–385 (RAFS), and 416–419 (GLCS). NADP(+) contacts are provided by residues threonine 461, 516–517 (SR), 522–526 (KVYVQ), and aspartate 559. An FAD-binding site is contributed by tryptophan 597.

Belongs to the NADPH-dependent diflavin oxidoreductase NDOR1 family. The protein in the N-terminal section; belongs to the flavodoxin family. It in the C-terminal section; belongs to the flavoprotein pyridine nucleotide cytochrome reductase family. Interacts with CIAPIN1; as part of the cytosolic iron-sulfur (Fe-S) protein assembly (CIA) machinery. Interacts with DCPS. It depends on FAD as a cofactor. The cofactor is FMN.

It localises to the cytoplasm. It is found in the perinuclear region. The enzyme catalyses 2 oxidized [2Fe-2S]-[protein] + NADPH = 2 reduced [2Fe-2S]-[protein] + NADP(+) + H(+). Its function is as follows. NADPH-dependent reductase which is a central component of the cytosolic iron-sulfur (Fe-S) protein assembly (CIA) machinery. Transfers electrons from NADPH via its FAD and FMN prosthetic groups to the [2Fe-2S] cluster of CIAPIN1, another key component of the CIA machinery. In turn, this reduced cluster provides electrons for assembly of cytosolic iron-sulfur cluster proteins. It can also reduce the [2Fe-2S] cluster of CISD1 and activate this protein implicated in Fe/S cluster repair. In vitro can fully activate methionine synthase/MTR in the presence of soluble cytochrome b5/CYB5A. The chain is NADPH-dependent diflavin oxidoreductase 1 from Mus musculus (Mouse).